The sequence spans 208 residues: MTSTGSNAAAARTARMERATSESSVLVEINLDGTGVSDIDTSVPFYDHMLTALCKHSLIDMTVKATGDTHIDVHHTVEDVAITFGEVLRTALGNKAGIRRFGEATVPLDEALANAVVDVSGRPYLVHGGEPAGQEYHLIGGHFTGSLTRHVFEAITLHAGICLHMNVIAGRDPHHIVEAQFKAFARALRAAVEPDPRVEGIPSTKGAL.

Belongs to the imidazoleglycerol-phosphate dehydratase family.

It is found in the cytoplasm. The enzyme catalyses D-erythro-1-(imidazol-4-yl)glycerol 3-phosphate = 3-(imidazol-4-yl)-2-oxopropyl phosphate + H2O. It functions in the pathway amino-acid biosynthesis; L-histidine biosynthesis; L-histidine from 5-phospho-alpha-D-ribose 1-diphosphate: step 6/9. The chain is Imidazoleglycerol-phosphate dehydratase from Pseudarthrobacter chlorophenolicus (strain ATCC 700700 / DSM 12829 / CIP 107037 / JCM 12360 / KCTC 9906 / NCIMB 13794 / A6) (Arthrobacter chlorophenolicus).